Reading from the N-terminus, the 238-residue chain is Leucyl/phenylalanyl-tRNA--protein transferase (238 aa).

It belongs to the L/F-transferase family.

The protein localises to the cytoplasm. It catalyses the reaction N-terminal L-lysyl-[protein] + L-leucyl-tRNA(Leu) = N-terminal L-leucyl-L-lysyl-[protein] + tRNA(Leu) + H(+). The catalysed reaction is N-terminal L-arginyl-[protein] + L-leucyl-tRNA(Leu) = N-terminal L-leucyl-L-arginyl-[protein] + tRNA(Leu) + H(+). The enzyme catalyses L-phenylalanyl-tRNA(Phe) + an N-terminal L-alpha-aminoacyl-[protein] = an N-terminal L-phenylalanyl-L-alpha-aminoacyl-[protein] + tRNA(Phe). Functionally, functions in the N-end rule pathway of protein degradation where it conjugates Leu, Phe and, less efficiently, Met from aminoacyl-tRNAs to the N-termini of proteins containing an N-terminal arginine or lysine. In Pseudoalteromonas translucida (strain TAC 125), this protein is Leucyl/phenylalanyl-tRNA--protein transferase.